Consider the following 248-residue polypeptide: ATP synthase subunit a, chloroplastic (248 aa).

The next 5 membrane-spanning stretches (helical) occupy residues 35–55 (GQVF…SFLG), 94–114 (VPYI…GALI), 133–153 (INTT…AGLS), 202–222 (VFTL…GLFA), and 224–244 (SIQA…AMEG).

It belongs to the ATPase A chain family. As to quaternary structure, F-type ATPases have 2 components, CF(1) - the catalytic core - and CF(0) - the membrane proton channel. CF(1) has five subunits: alpha(3), beta(3), gamma(1), delta(1), epsilon(1). CF(0) has four main subunits: a, b, b' and c.

Its subcellular location is the plastid. The protein localises to the chloroplast thylakoid membrane. In terms of biological role, key component of the proton channel; it plays a direct role in the translocation of protons across the membrane. The sequence is that of ATP synthase subunit a, chloroplastic from Porphyra purpurea (Red seaweed).